The sequence spans 121 residues: Chorion protein S15 (121 aa).

The N-terminal stretch at 1 to 18 (MKYLFVCVSLALFAYISA) is a signal peptide.

It belongs to the chorion protein S15/S18 family.

It localises to the secreted. Functionally, chorion membrane (egg shell) protein; plays a role in protecting the egg from the environment. This chain is Chorion protein S15 (Cp15), found in Drosophila subobscura (Fruit fly).